The chain runs to 267 residues: Ribosomal RNA small subunit methyltransferase A (267 aa).

S-adenosyl-L-methionine contacts are provided by His13, Leu15, Gly40, Glu61, Asp85, and Asn105.

It belongs to the class I-like SAM-binding methyltransferase superfamily. rRNA adenine N(6)-methyltransferase family. RsmA subfamily.

It localises to the cytoplasm. It catalyses the reaction adenosine(1518)/adenosine(1519) in 16S rRNA + 4 S-adenosyl-L-methionine = N(6)-dimethyladenosine(1518)/N(6)-dimethyladenosine(1519) in 16S rRNA + 4 S-adenosyl-L-homocysteine + 4 H(+). In terms of biological role, specifically dimethylates two adjacent adenosines (A1518 and A1519) in the loop of a conserved hairpin near the 3'-end of 16S rRNA in the 30S particle. May play a critical role in biogenesis of 30S subunits. The chain is Ribosomal RNA small subunit methyltransferase A from Bacteroides thetaiotaomicron (strain ATCC 29148 / DSM 2079 / JCM 5827 / CCUG 10774 / NCTC 10582 / VPI-5482 / E50).